The following is a 1235-amino-acid chain: Ubiquitin carboxyl-terminal hydrolase 40 (1235 aa).

One can recognise a USP domain in the interval 41-482 (SGIRNQGGTC…SAYMLFYRKS (442 aa)). Catalysis depends on C50, which acts as the Nucleophile. Residue H305 is the Proton acceptor of the active site. A compositionally biased stretch (basic and acidic residues) spans 1180–1190 (IRDDTGKEKQK). The disordered stretch occupies residues 1180–1235 (IRDDTGKEKQKQRALGRRKSQEALHEQSSYILSSAETPARPRAPETSLSIHVGSFR). Residues 1205–1215 (EQSSYILSSAE) show a composition bias toward polar residues.

The protein belongs to the peptidase C19 family. In terms of tissue distribution, broadly expressed.

The enzyme catalyses Thiol-dependent hydrolysis of ester, thioester, amide, peptide and isopeptide bonds formed by the C-terminal Gly of ubiquitin (a 76-residue protein attached to proteins as an intracellular targeting signal).. Functionally, may be catalytically inactive. This chain is Ubiquitin carboxyl-terminal hydrolase 40 (USP40), found in Homo sapiens (Human).